We begin with the raw amino-acid sequence, 229 residues long: Flagellar L-ring protein (229 aa).

The N-terminal stretch at 1 to 25 (MKQVRLLPSATVRAACAVAVAALAG) is a signal peptide. A lipid anchor (N-palmitoyl cysteine) is attached at Cys-26. A lipid anchor (S-diacylglycerol cysteine) is attached at Cys-26.

The protein belongs to the FlgH family. In terms of assembly, the basal body constitutes a major portion of the flagellar organelle and consists of four rings (L,P,S, and M) mounted on a central rod.

It localises to the cell outer membrane. It is found in the bacterial flagellum basal body. Its function is as follows. Assembles around the rod to form the L-ring and probably protects the motor/basal body from shearing forces during rotation. The protein is Flagellar L-ring protein of Burkholderia vietnamiensis (strain G4 / LMG 22486) (Burkholderia cepacia (strain R1808)).